Reading from the N-terminus, the 446-residue chain is D(1A) dopamine receptor (446 aa).

The Extracellular portion of the chain corresponds to 1-23; the sequence is MRTLNTSTMDGTGLVVERDFSFR. Residue Asn-5 is glycosylated (N-linked (GlcNAc...) asparagine). Residues 24-49 form a helical membrane-spanning segment; it reads ILTACFLSLLILSTLLGNTLVCAAVI. At 50-60 the chain is on the cytoplasmic side; the sequence is RFRHLRSKVTN. The helical transmembrane segment at 61–87 threads the bilayer; the sequence is FFVISLAVSDLLVAVLVMPWKAVAEIA. At 88-96 the chain is on the extracellular side; sequence GFWPFGSFC. A disulfide bridge links Cys-96 with Cys-186. The helical transmembrane segment at 97-119 threads the bilayer; the sequence is NIWVAFDIMCSTASILNLCVISV. Over 120-138 the chain is Cytoplasmic; that stretch reads DRYWAISSPFRYERKMTPK. Residues 139–163 traverse the membrane as a helical segment; it reads AAFILISVAWTLSVLISFIPVQLSW. The Extracellular portion of the chain corresponds to 164 to 192; it reads HKAKPTSPSDGNVTSLGKTTHNCDSSLSR. Residues 193–218 traverse the membrane as a helical segment; it reads TYAISSSLISFYIPVAIMIVTYTRIY. The Cytoplasmic portion of the chain corresponds to 219–272; sequence RIAQKQIRRISALERAAVHAKNCQTTAGNGNPAECSQPESSFKMSFKRETKVLK. Residues 273-299 form a helical membrane-spanning segment; the sequence is TLSVIMGVFVCCWLPFFILNCMVPFCG. Residues 300–312 are Extracellular-facing; it reads SGETKPFCIDSIT. A helical transmembrane segment spans residues 313-337; that stretch reads FDVFVWFGWANSSLNPIIYAFNADF. Residues 338 to 446 are Cytoplasmic-facing; the sequence is RKAFSTLLGC…PITQNGQHPT (109 aa). 2 S-palmitoyl cysteine lipidation sites follow: Cys-347 and Cys-351.

This sequence belongs to the G-protein coupled receptor 1 family. As to quaternary structure, interacts with DNAJC14 via its C-terminus. Interacts with DRD2. Interacts with DORIP1.

The protein localises to the cell membrane. It localises to the endoplasmic reticulum membrane. It is found in the cell projection. Its subcellular location is the cilium membrane. The protein resides in the dendrite. The protein localises to the dendritic spine. Dopamine receptor whose activity is mediated by G proteins which activate adenylyl cyclase. The chain is D(1A) dopamine receptor (DRD1) from Sus scrofa (Pig).